Here is a 180-residue protein sequence, read N- to C-terminus: Stathmin-3 (180 aa).

Residues Cys-22 and Cys-24 are each lipidated (S-palmitoyl cysteine). Residues 38-180 (GDMEVKQLDK…NKEQREEMSG (143 aa)) enclose the SLD domain. A phosphoserine mark is found at Ser-50, Ser-60, Ser-65, Ser-68, Ser-72, Ser-73, and Ser-81. Residues 58–82 (LKSPSDLSPESPMLSSPPKRKDTSL) are disordered. The span at 60 to 74 (SPSDLSPESPMLSSP) shows a compositional bias: low complexity. Positions 76–179 (KRKDTSLEEL…RNKEQREEMS (104 aa)) form a coiled coil.

This sequence belongs to the stathmin family. As to quaternary structure, interacts with STAT3. Interacts with CLU (secreted form); this interaction may act as an important modulator during neuronal differentiation. In terms of processing, N-terminal palmitoylation promotes specific anchoring to the cytosolic leaflet of Golgi membranes and subsequent vesicular trafficking along dendrites and axons. Neuronal Stathmins are substrates for palmitoyltransferases ZDHHC3, ZDHHC7 and ZDHHC15.

It localises to the golgi apparatus. The protein resides in the cell projection. It is found in the growth cone. The protein localises to the axon. Its subcellular location is the cytoplasm. It localises to the cytosol. Functionally, exhibits microtubule-destabilizing activity, which is antagonized by STAT3. This Bos taurus (Bovine) protein is Stathmin-3 (STMN3).